The sequence spans 219 residues: Thiopurine S-methyltransferase (219 aa).

Residues tryptophan 10, leucine 45, glutamate 66, and arginine 123 each coordinate S-adenosyl-L-methionine.

It belongs to the class I-like SAM-binding methyltransferase superfamily. TPMT family.

It is found in the cytoplasm. The enzyme catalyses S-adenosyl-L-methionine + a thiopurine = S-adenosyl-L-homocysteine + a thiopurine S-methylether.. The protein is Thiopurine S-methyltransferase of Shewanella frigidimarina (strain NCIMB 400).